The primary structure comprises 517 residues: FAD-dependent monooxygenase dmxR9 (517 aa).

Val-96 and Arg-162 together coordinate FAD. Active-site residues include Arg-243 and Tyr-270. Positions 365 and 378 each coordinate FAD.

It belongs to the paxM FAD-dependent monooxygenase family. FAD is required as a cofactor.

It functions in the pathway secondary metabolite biosynthesis. Functionally, FAD-dependent monooxygenase; part of the gene cluster that mediates the biosynthesis of the dimeric xanthones cryptosporioptides. The pathway begins with the synthesis of atrochrysone thioester by the polyketide synthase dmx-nrPKS. The atrochrysone carboxyl ACP thioesterase dmxR1 then breaks the thioester bond and releases the atrochrysone carboxylic acid from dmx-nrPKS. Atrochrysone carboxylic acid is decarboxylated by the decarboxylase dmxR15, and oxidized by the anthrone oxygenase dmxR16 to yield emodin. Emodin is then reduced to emodin hydroquinone by the oxidoreductase dmxR7. A-ring reduction by the short chain dehydrogenase dmxR18, dehydration by the scytalone dehydratase-like protein dmxR17 and probable spontaneous re-oxidation, results in overall deoxygenation to chrysophanol. Baeyer-Villiger oxidation by the Baeyer-Villiger monooxygenase (BVMO) dmxR6 then yields monodictylactone in equilibrium with monodictyphenone. In the case of the cryptosporioptides biosynthesis, monodictylactone is reduced at C-12 to an alcohol (by the short chain dehydrogenases dmxR12 or dmxR8) and hydroxylated at C-5 by dmxR9, yielding the electron-rich aromatic which could eliminate H(2)O to form the ortho-quinonemethide, followed by tautomerisation to paraquinone and complete the formal reduction to produce the 10-methylgroup. Conjugate addition of C-4a-OH to the resulting paraquinone by the monooxygenase dmxR10 then gives cyclohexadienone, which is then reduced at C-5 by the short chain dehydrogenase dmxR3 to give the dihydroxanthone. The 6,7-epoxide in the cryptosporioptides could be introduced by the cytochrome P450 monooxygenase dmxL3. The highly reducing PKS dmxL2 manufactures butyrate, which is further carboxylated by dmxL1 to form ethylmalonate. It is not yet clear whether the carboxylation occurs while the butyrate is attached to the ACP of dmxL2, but this unusual fungal metabolite could then be esterified to O-5 by the O-acetyltransferase dmxR13. Finally, dimerization performed by dmxR5 gives the observed dimers cryptosporioptides A, B and C as the final products of the pathway. The sequence is that of FAD-dependent monooxygenase dmxR9 from Cryptosporiopsis sp. (strain 8999).